The primary structure comprises 371 residues: 3-isopropylmalate dehydrogenase (371 aa).

Thr55 is subject to Phosphothreonine. 78-89 (GPEWTNPNCRPE) lines the NAD(+) pocket. Substrate contacts are provided by Arg96, Arg106, Arg135, and Asp224. The Mg(2+) site is built by Asp224, Asp249, and Asp253. Residue 290-302 (GSAPDIAGKGIVN) coordinates NAD(+).

Belongs to the isocitrate and isopropylmalate dehydrogenases family. In terms of assembly, homodimer. Mg(2+) serves as cofactor. Requires Mn(2+) as cofactor.

It is found in the cytoplasm. It catalyses the reaction (2R,3S)-3-isopropylmalate + NAD(+) = 4-methyl-2-oxopentanoate + CO2 + NADH. It functions in the pathway amino-acid biosynthesis; L-leucine biosynthesis; L-leucine from 3-methyl-2-oxobutanoate: step 3/4. Functionally, catalyzes the oxidation of 3-carboxy-2-hydroxy-4-methylpentanoate (3-isopropylmalate) to 3-carboxy-4-methyl-2-oxopentanoate. The product decarboxylates to 4-methyl-2 oxopentanoate. The polypeptide is 3-isopropylmalate dehydrogenase (leu1) (Schizosaccharomyces pombe (strain 972 / ATCC 24843) (Fission yeast)).